Consider the following 305-residue polypeptide: Glycine--tRNA ligase alpha subunit (305 aa).

This sequence belongs to the class-II aminoacyl-tRNA synthetase family. Tetramer of two alpha and two beta subunits.

It is found in the cytoplasm. It catalyses the reaction tRNA(Gly) + glycine + ATP = glycyl-tRNA(Gly) + AMP + diphosphate. The chain is Glycine--tRNA ligase alpha subunit from Streptococcus pneumoniae (strain Hungary19A-6).